A 445-amino-acid chain; its full sequence is tRNA(Ile)-lysidine synthase (445 aa).

33–38 lines the ATP pocket; that stretch reads SGGLDS.

Belongs to the tRNA(Ile)-lysidine synthase family.

The protein localises to the cytoplasm. It catalyses the reaction cytidine(34) in tRNA(Ile2) + L-lysine + ATP = lysidine(34) in tRNA(Ile2) + AMP + diphosphate + H(+). Functionally, ligates lysine onto the cytidine present at position 34 of the AUA codon-specific tRNA(Ile) that contains the anticodon CAU, in an ATP-dependent manner. Cytidine is converted to lysidine, thus changing the amino acid specificity of the tRNA from methionine to isoleucine. This Pseudomonas syringae pv. tomato (strain ATCC BAA-871 / DC3000) protein is tRNA(Ile)-lysidine synthase.